We begin with the raw amino-acid sequence, 353 residues long: Fe(3+) ions import ATP-binding protein FbpC (353 aa).

The ABC transporter domain occupies 9–239; it reads VTFENVTKKF…PASAFIADFM (231 aa). Residue 41-48 participates in ATP binding; that stretch reads GPSGCGKT.

This sequence belongs to the ABC transporter superfamily. Fe(3+) ion importer (TC 3.A.1.10) family. The complex is composed of two ATP-binding proteins (FbpC), two transmembrane proteins (FbpB) and a solute-binding protein (FbpA).

Its subcellular location is the cell inner membrane. It carries out the reaction Fe(3+)(out) + ATP + H2O = Fe(3+)(in) + ADP + phosphate + H(+). In terms of biological role, part of the ABC transporter complex FbpABC involved in Fe(3+) ions import. Responsible for energy coupling to the transport system. The polypeptide is Fe(3+) ions import ATP-binding protein FbpC (Brucella suis biovar 1 (strain 1330)).